A 374-amino-acid chain; its full sequence is Ribosomal RNA large subunit methyltransferase G (374 aa).

This sequence belongs to the methyltransferase superfamily. RlmG family.

The protein resides in the cytoplasm. It carries out the reaction guanosine(1835) in 23S rRNA + S-adenosyl-L-methionine = N(2)-methylguanosine(1835) in 23S rRNA + S-adenosyl-L-homocysteine + H(+). Its function is as follows. Specifically methylates the guanine in position 1835 (m2G1835) of 23S rRNA. The chain is Ribosomal RNA large subunit methyltransferase G from Pseudomonas fluorescens (strain Pf0-1).